The following is a 225-amino-acid chain: Leucyl/phenylalanyl-tRNA--protein transferase (225 aa).

The protein belongs to the L/F-transferase family.

It localises to the cytoplasm. The enzyme catalyses N-terminal L-lysyl-[protein] + L-leucyl-tRNA(Leu) = N-terminal L-leucyl-L-lysyl-[protein] + tRNA(Leu) + H(+). It carries out the reaction N-terminal L-arginyl-[protein] + L-leucyl-tRNA(Leu) = N-terminal L-leucyl-L-arginyl-[protein] + tRNA(Leu) + H(+). It catalyses the reaction L-phenylalanyl-tRNA(Phe) + an N-terminal L-alpha-aminoacyl-[protein] = an N-terminal L-phenylalanyl-L-alpha-aminoacyl-[protein] + tRNA(Phe). In terms of biological role, functions in the N-end rule pathway of protein degradation where it conjugates Leu, Phe and, less efficiently, Met from aminoacyl-tRNAs to the N-termini of proteins containing an N-terminal arginine or lysine. This chain is Leucyl/phenylalanyl-tRNA--protein transferase, found in Gluconobacter oxydans (strain 621H) (Gluconobacter suboxydans).